We begin with the raw amino-acid sequence, 269 residues long: Formamidopyrimidine-DNA glycosylase (269 aa).

Pro2 acts as the Schiff-base intermediate with DNA in catalysis. Glu3 (proton donor) is an active-site residue. Lys57 serves as the catalytic Proton donor; for beta-elimination activity. 3 residues coordinate DNA: His90, Arg109, and Lys150. An FPG-type zinc finger spans residues 235–269 (QVYGRKGEPCRVCGTPIVATKHAQRATFYCRHCQK). Arg259 acts as the Proton donor; for delta-elimination activity in catalysis.

The protein belongs to the FPG family. Monomer. The cofactor is Zn(2+).

The enzyme catalyses Hydrolysis of DNA containing ring-opened 7-methylguanine residues, releasing 2,6-diamino-4-hydroxy-5-(N-methyl)formamidopyrimidine.. It catalyses the reaction 2'-deoxyribonucleotide-(2'-deoxyribose 5'-phosphate)-2'-deoxyribonucleotide-DNA = a 3'-end 2'-deoxyribonucleotide-(2,3-dehydro-2,3-deoxyribose 5'-phosphate)-DNA + a 5'-end 5'-phospho-2'-deoxyribonucleoside-DNA + H(+). Involved in base excision repair of DNA damaged by oxidation or by mutagenic agents. Acts as a DNA glycosylase that recognizes and removes damaged bases. Has a preference for oxidized purines, such as 7,8-dihydro-8-oxoguanine (8-oxoG). Has AP (apurinic/apyrimidinic) lyase activity and introduces nicks in the DNA strand. Cleaves the DNA backbone by beta-delta elimination to generate a single-strand break at the site of the removed base with both 3'- and 5'-phosphates. In Salmonella choleraesuis (strain SC-B67), this protein is Formamidopyrimidine-DNA glycosylase.